Consider the following 721-residue polypeptide: Procollagen-lysine,2-oxoglutarate 5-dioxygenase (721 aa).

Residues methionine 1–alanine 21 form the signal peptide. 3 N-linked (GlcNAc...) asparagine glycosylation sites follow: asparagine 504, asparagine 530, and asparagine 536. In terms of domain architecture, Fe2OG dioxygenase spans asparagine 627–proline 721. 2 residues coordinate Fe cation: histidine 650 and aspartate 652. Asparagine 680 carries N-linked (GlcNAc...) asparagine glycosylation. Histidine 702 contacts Fe cation. An N-linked (GlcNAc...) asparagine glycan is attached at asparagine 709. Position 712 (arginine 712) interacts with 2-oxoglutarate.

Requires L-ascorbate as cofactor. It depends on Fe(2+) as a cofactor.

It localises to the endoplasmic reticulum. The protein localises to the secreted. The protein resides in the extracellular space. The catalysed reaction is L-lysyl-[collagen] + 2-oxoglutarate + O2 = (5R)-5-hydroxy-L-lysyl-[collagen] + succinate + CO2. Functionally, forms hydroxylysine residues in collagen type IV. Required for the secretion of collagen type IV (vkg) from haemocytes, fat body and follicle cells. The chain is Procollagen-lysine,2-oxoglutarate 5-dioxygenase from Drosophila melanogaster (Fruit fly).